The primary structure comprises 94 residues: Pyrimidine/purine nucleoside phosphorylase (94 aa).

Belongs to the nucleoside phosphorylase PpnP family.

The enzyme catalyses a purine D-ribonucleoside + phosphate = a purine nucleobase + alpha-D-ribose 1-phosphate. It carries out the reaction adenosine + phosphate = alpha-D-ribose 1-phosphate + adenine. The catalysed reaction is cytidine + phosphate = cytosine + alpha-D-ribose 1-phosphate. It catalyses the reaction guanosine + phosphate = alpha-D-ribose 1-phosphate + guanine. The enzyme catalyses inosine + phosphate = alpha-D-ribose 1-phosphate + hypoxanthine. It carries out the reaction thymidine + phosphate = 2-deoxy-alpha-D-ribose 1-phosphate + thymine. The catalysed reaction is uridine + phosphate = alpha-D-ribose 1-phosphate + uracil. It catalyses the reaction xanthosine + phosphate = alpha-D-ribose 1-phosphate + xanthine. Catalyzes the phosphorolysis of diverse nucleosides, yielding D-ribose 1-phosphate and the respective free bases. Can use uridine, adenosine, guanosine, cytidine, thymidine, inosine and xanthosine as substrates. Also catalyzes the reverse reactions. The polypeptide is Pyrimidine/purine nucleoside phosphorylase (Aeromonas hydrophila subsp. hydrophila (strain ATCC 7966 / DSM 30187 / BCRC 13018 / CCUG 14551 / JCM 1027 / KCTC 2358 / NCIMB 9240 / NCTC 8049)).